The sequence spans 413 residues: Tyrosine--tRNA ligase (413 aa).

The 'HIGH' region signature appears at 59-68; sequence PTAPDIHIGH. The 'KMSKS' region motif lies at 243 to 247; sequence KMSKS. Position 246 (K246) interacts with ATP. In terms of domain architecture, S4 RNA-binding spans 351–411; that stretch reads LAIGQLLKQA…GKRRFARVTL (61 aa).

This sequence belongs to the class-I aminoacyl-tRNA synthetase family. TyrS type 2 subfamily. Homodimer.

Its subcellular location is the cytoplasm. The enzyme catalyses tRNA(Tyr) + L-tyrosine + ATP = L-tyrosyl-tRNA(Tyr) + AMP + diphosphate + H(+). Its function is as follows. Catalyzes the attachment of tyrosine to tRNA(Tyr) in a two-step reaction: tyrosine is first activated by ATP to form Tyr-AMP and then transferred to the acceptor end of tRNA(Tyr). The polypeptide is Tyrosine--tRNA ligase (Burkholderia lata (strain ATCC 17760 / DSM 23089 / LMG 22485 / NCIMB 9086 / R18194 / 383)).